Here is a 286-residue protein sequence, read N- to C-terminus: Cytosolic 5'-nucleotidase 3 (286 aa).

Asp38 (nucleophile) is an active-site residue. Residues Asp38 and Asp40 each coordinate Mg(2+). Asp40 acts as the Proton donor in catalysis. Substrate contacts are provided by residues Glu85, Ser106, 153 to 154 (SA), and Lys202. Asp227 is a Mg(2+) binding site.

This sequence belongs to the pyrimidine 5'-nucleotidase family.

It is found in the cytoplasm. The enzyme catalyses a ribonucleoside 5'-phosphate + H2O = a ribonucleoside + phosphate. Its function is as follows. Can act both as nucleotidase and as phosphotransferase. This chain is Cytosolic 5'-nucleotidase 3 (nt5c3), found in Danio rerio (Zebrafish).